Consider the following 156-residue polypeptide: Small ribosomal subunit protein uS7 (156 aa).

This sequence belongs to the universal ribosomal protein uS7 family. In terms of assembly, part of the 30S ribosomal subunit. Contacts proteins S9 and S11.

In terms of biological role, one of the primary rRNA binding proteins, it binds directly to 16S rRNA where it nucleates assembly of the head domain of the 30S subunit. Is located at the subunit interface close to the decoding center, probably blocks exit of the E-site tRNA. In Dehalococcoides mccartyi (strain ATCC BAA-2266 / KCTC 15142 / 195) (Dehalococcoides ethenogenes (strain 195)), this protein is Small ribosomal subunit protein uS7.